Consider the following 230-residue polypeptide: Transcriptional regulatory protein CitT (230 aa).

The Response regulatory domain maps to K6–V124. D59 carries the 4-aspartylphosphate modification. The H-T-H motif DNA-binding region spans A184 to E203.

In terms of processing, phosphorylated by CitS.

It is found in the cytoplasm. Member of the two-component regulatory system CitT/CitS. The protein is Transcriptional regulatory protein CitT (citT) of Halalkalibacterium halodurans (strain ATCC BAA-125 / DSM 18197 / FERM 7344 / JCM 9153 / C-125) (Bacillus halodurans).